The primary structure comprises 324 residues: DNA-directed RNA polymerase subunit alpha (324 aa).

An alpha N-terminal domain (alpha-NTD) region spans residues 1 to 230 (MQSSGLLKPR…EQLSVFADLE (230 aa)). An alpha C-terminal domain (alpha-CTD) region spans residues 244-324 (VDPVLLRPVD…NWPPAGLEKA (81 aa)).

The protein belongs to the RNA polymerase alpha chain family. Homodimer. The RNAP catalytic core consists of 2 alpha, 1 beta, 1 beta' and 1 omega subunit. When a sigma factor is associated with the core the holoenzyme is formed, which can initiate transcription.

It catalyses the reaction RNA(n) + a ribonucleoside 5'-triphosphate = RNA(n+1) + diphosphate. In terms of biological role, DNA-dependent RNA polymerase catalyzes the transcription of DNA into RNA using the four ribonucleoside triphosphates as substrates. This is DNA-directed RNA polymerase subunit alpha from Dechloromonas aromatica (strain RCB).